Here is a 122-residue protein sequence, read N- to C-terminus: uncharacterized protein (122 aa).

Residues 79–90 (NERVTSRVTNSR) are compositionally biased toward polar residues. The tract at residues 79–122 (NERVTSRVTNSRTESESNGNGNATGNTSSNANSNGNANGIYIRK) is disordered. The segment covering 94 to 122 (ESNGNGNATGNTSSNANSNGNANGIYIRK) has biased composition (low complexity).

This is an uncharacterized protein from Leptolyngbya boryana (Plectonema boryanum).